Reading from the N-terminus, the 236-residue chain is Putative protein ZBED10P (236 aa).

The sequence is that of Putative protein ZBED10P from Homo sapiens (Human).